A 213-amino-acid polypeptide reads, in one-letter code: T-cell surface glycoprotein CD8 beta chain (213 aa).

The N-terminal stretch at 1 to 21 (MQPWLWLVFSMKLAALWSSSA) is a signal peptide. In terms of domain architecture, Ig-like V-type spans 22-133 (LIQTPSSLLV…KMVFGTGTKL (112 aa)). Topologically, residues 22–175 (LIQTPSSLLV…QKGLTCSLTT (154 aa)) are extracellular. N-linked (GlcNAc...) asparagine glycosylation occurs at N34. C41 and C117 are disulfide-bonded. The helical transmembrane segment at 176 to 196 (LSLLVVCILLLLAFLGVAVYF) threads the bilayer. The Cytoplasmic segment spans residues 197–213 (YCVRRRARIHFMKQFHK).

As to quaternary structure, forms disulfide-linked heterodimers with CD8A at the cell surface. Interacts with CD3D; this interaction couples TCR-CD3 with CD8. Interacts with LCK. Palmitoylated at the cytoplasmic tail and thereby targets the heterodimer CD8A/CD8B to lipid rafts unlike CD8A homodimers.

It localises to the membrane. Functionally, integral membrane glycoprotein that plays an essential role in the immune response and serves multiple functions in responses against both external and internal offenses. In T-cells, functions primarily as a coreceptor for MHC class I molecule:peptide complex. The antigens presented by class I peptides are derived from cytosolic proteins while class II derived from extracellular proteins. Interacts simultaneously with the T-cell receptor (TCR) and the MHC class I proteins presented by antigen presenting cells (APCs). In turn, recruits the Src kinase LCK to the vicinity of the TCR-CD3 complex. A palmitoylation site in the cytoplasmic tail of CD8B chain contributes to partitioning of CD8 into the plasma membrane lipid rafts where signaling proteins are enriched. Once LCK recruited, it initiates different intracellular signaling pathways by phosphorylating various substrates ultimately leading to lymphokine production, motility, adhesion and activation of cytotoxic T-lymphocytes (CTLs). Additionally, plays a critical role in thymic selection of CD8+ T-cells. The sequence is that of T-cell surface glycoprotein CD8 beta chain (Cd8b) from Mus musculus (Mouse).